The sequence spans 353 residues: Rhodopsin (353 aa).

Residues methionine 1–lysine 36 are Extracellular-facing. Asparagine 2 and asparagine 15 each carry an N-linked (GlcNAc...) asparagine glycan. Residues tyrosine 37–valine 61 form a helical membrane-spanning segment. Over threonine 62–asparagine 73 the chain is Cytoplasmic. Residues tyrosine 74–tyrosine 96 traverse the membrane as a helical segment. Topologically, residues serine 97–cysteine 110 are extracellular. A disulfide bridge connects residues cysteine 110 and cysteine 187. The chain crosses the membrane as a helical span at residues asparagine 111–isoleucine 133. The 'Ionic lock' involved in activated form stabilization signature appears at glutamate 134–tyrosine 136. Residues glutamate 134–histidine 152 are Cytoplasmic-facing. A helical membrane pass occupies residues alanine 153–valine 173. Topologically, residues glycine 174–serine 202 are extracellular. A helical membrane pass occupies residues phenylalanine 203–glycine 224. The Cytoplasmic segment spans residues arginine 225 to arginine 252. Residues methionine 253–tyrosine 274 traverse the membrane as a helical segment. Residues isoleucine 275–threonine 286 lie on the Extracellular side of the membrane. A helical membrane pass occupies residues phenylalanine 287 to leucine 308. Position 296 is an N6-(retinylidene)lysine (lysine 296). At methionine 309–alanine 353 the chain is on the cytoplasmic side. Residues aspartate 330 to alanine 353 form a disordered region. Residues serine 336–alanine 353 are compositionally biased toward low complexity.

Belongs to the G-protein coupled receptor 1 family. Opsin subfamily. Post-translationally, phosphorylated on some or all of the serine and threonine residues present in the C-terminal region. In terms of processing, contains one covalently linked retinal chromophore.

The protein resides in the membrane. Its subcellular location is the cell projection. The protein localises to the cilium. It is found in the photoreceptor outer segment. Functionally, photoreceptor required for image-forming vision at low light intensity. While most salt water fish species use retinal as chromophore, most freshwater fish use 3-dehydroretinal, or a mixture of retinal and 3-dehydroretinal. Light-induced isomerization of 11-cis to all-trans retinal triggers a conformational change that activates signaling via G-proteins. Subsequent receptor phosphorylation mediates displacement of the bound G-protein alpha subunit by arrestin and terminates signaling. In Petromyzon marinus (Sea lamprey), this protein is Rhodopsin (RHO).